Here is a 532-residue protein sequence, read N- to C-terminus: Alkaline phosphatase (532 aa).

Positions 1-20 are disordered; the sequence is MASERDPLLPVHGEGPESPS. A helical; Signal-anchor for type II membrane protein transmembrane segment spans residues 27–47; sequence WIKHGILLILVLSTVIFFYFF. D68 lines the Mg(2+) pocket. Residue D68 coordinates Zn(2+). S115 serves as the catalytic Phosphoserine intermediate. Mg(2+) is bound by residues D166, T168, and E306. The Zn(2+) site is built by D311, H315, D352, H353, and H456.

This sequence belongs to the alkaline phosphatase family. The cofactor is Mg(2+). It depends on Zn(2+) as a cofactor.

The protein resides in the membrane. It carries out the reaction a phosphate monoester + H2O = an alcohol + phosphate. The sequence is that of Alkaline phosphatase from Schizosaccharomyces pombe (strain 972 / ATCC 24843) (Fission yeast).